The following is a 376-amino-acid chain: Histidinol dehydrogenase (376 aa).

The NAD(+) site is built by Tyr100 and Asn182. Ser205, Gln227, and His230 together coordinate substrate. 2 residues coordinate Zn(2+): Gln227 and His230. Active-site proton acceptor residues include Glu275 and His276. Residues His276, Asp309, Glu363, and His368 each contribute to the substrate site. Asp309 serves as a coordination point for Zn(2+). His368 contacts Zn(2+).

It belongs to the histidinol dehydrogenase family. Requires Zn(2+) as cofactor.

The catalysed reaction is L-histidinol + 2 NAD(+) + H2O = L-histidine + 2 NADH + 3 H(+). Its pathway is amino-acid biosynthesis; L-histidine biosynthesis; L-histidine from 5-phospho-alpha-D-ribose 1-diphosphate: step 9/9. In terms of biological role, catalyzes the sequential NAD-dependent oxidations of L-histidinol to L-histidinaldehyde and then to L-histidine. The chain is Histidinol dehydrogenase from Thermococcus kodakarensis (strain ATCC BAA-918 / JCM 12380 / KOD1) (Pyrococcus kodakaraensis (strain KOD1)).